Here is a 1935-residue protein sequence, read N- to C-terminus: Rho GTPase-activating protein 21 (1935 aa).

Residues 1–46 (MATRRATVPEQQQQQPSSPGSEISKNKDGQEQSEMVSPTEEEGFCW) are disordered. A PDZ domain is found at 78 to 163 (HTTVKDEENG…TLELSVMPKD (86 aa)). Disordered stretches follow at residues 212 to 237 (VEVPPSGTSLTKQQSSRPVRTATTQP), 339 to 373 (PPSYGGHSESMFSTRPSQAEESPSPTNHYASPGSH), 413 to 456 (QNTT…QERL), 673 to 718 (TSTS…DSNS), and 862 to 919 (NSKT…DVFS). 3 stretches are compositionally biased toward polar residues: residues 217–237 (SGTSLTKQQSSRPVRTATTQP), 348–373 (SMFSTRPSQAEESPSPTNHYASPGSH), and 413–429 (QNTTDYDQMLPNRSSGQ). Composition is skewed to low complexity over residues 441–451 (PQSVQMRQRSV) and 673–685 (TSTSASSSSPAHT). Positions 708-718 (SPEANAGDSNS) are enriched in polar residues. A compositionally biased stretch (basic and acidic residues) spans 863–884 (SKTERSKSCDEGLDDYKDEGKL). The region spanning 920-1033 (DSNKEGFLYF…WIKAIQENGN (114 aa)) is the PH domain. The tract at residues 1056-1126 (TMMSSSSNKS…KGSWRRIMKK (71 aa)) is disordered. The span at 1059–1072 (SSSSNKSEQSPKPS) shows a compositional bias: low complexity. Residues 1097 to 1119 (PKQESERRLFSKDDISPPKDKGS) show a composition bias toward basic and acidic residues. The Rho-GAP domain maps to 1140–1332 (VRLDDCPPAH…TLIQQHDWFF (193 aa)). 7 disordered regions span residues 1341–1393 (ITAV…GSGK), 1411–1431 (RKRKKQRDKPQPSSSEDELDN), 1488–1510 (SEATSPCPPKLSEPPIVNHRLPP), 1525–1548 (SMSDSGTMLSTSSQASAQRSKPKV), 1637–1665 (HRSKVEEPTRNVQVNSEGSPSCTEGSITP), 1688–1733 (SIRQ…EPEE), and 1838–1925 (SELS…SGTQ). Positions 1345–1355 (QEESTVESQPV) are enriched in polar residues. Low complexity predominate over residues 1376–1393 (SDSASDSAKSKGSWGSGK). 2 stretches are compositionally biased toward polar residues: residues 1525 to 1543 (SMSDSGTMLSTSSQASAQR) and 1646 to 1662 (RNVQVNSEGSPSCTEGS). Residues 1691 to 1705 (QKTDSECSAESKNEE) show a composition bias toward basic and acidic residues. Polar residues-rich tracts occupy residues 1872–1889 (QVSTAIVTAGSESPSQGT) and 1898–1911 (NGDSFQSKNKNNFS).

It is found in the golgi apparatus membrane. The protein localises to the cell junction. It localises to the cytoplasmic vesicle membrane. Its subcellular location is the cytoplasm. The protein resides in the cytoskeleton. GTPase-activating protein (GAP) for rhoa and cdc42. The protein is Rho GTPase-activating protein 21 (arhgap21) of Xenopus tropicalis (Western clawed frog).